The following is a 225-amino-acid chain: Urease accessory protein UreG (225 aa).

25–32 (GPVGAGKT) contributes to the GTP binding site.

This sequence belongs to the SIMIBI class G3E GTPase family. UreG subfamily. Homodimer. UreD, UreF and UreG form a complex that acts as a GTP-hydrolysis-dependent molecular chaperone, activating the urease apoprotein by helping to assemble the nickel containing metallocenter of UreC. The UreE protein probably delivers the nickel.

It is found in the cytoplasm. Facilitates the functional incorporation of the urease nickel metallocenter. This process requires GTP hydrolysis, probably effectuated by UreG. This chain is Urease accessory protein UreG, found in Haemophilus influenzae (strain 86-028NP).